Here is a 541-residue protein sequence, read N- to C-terminus: Chaperonin GroEL (541 aa).

ATP is bound by residues 29–32 (TLGP), 86–90 (DGTTT), G413, 476–478 (NAA), and D492.

The protein belongs to the chaperonin (HSP60) family. Forms a cylinder of 14 subunits composed of two heptameric rings stacked back-to-back. Interacts with the co-chaperonin GroES.

The protein resides in the cytoplasm. It carries out the reaction ATP + H2O + a folded polypeptide = ADP + phosphate + an unfolded polypeptide.. Together with its co-chaperonin GroES, plays an essential role in assisting protein folding. The GroEL-GroES system forms a nano-cage that allows encapsulation of the non-native substrate proteins and provides a physical environment optimized to promote and accelerate protein folding. This chain is Chaperonin GroEL, found in Streptococcus equi subsp. equi (strain 4047).